Consider the following 311-residue polypeptide: MSRPRKPKGRPISGWLILDKPLDFGSTEAVSKIKWLFKAQKAGHAGTLDPLASGMLPIALGDATKTVPYVMDGRKIYEFTVAWGEERSTDDLEGEAVRSSAARPEEEAIRALLPKYTGVIAQVPPQFSAIKIGGERAYDLARDGETVEIPAREVEVFRLSLIGSAPNLAHFEIECGKGTYVRSLARDMGRDLGCFGHIASLRRTFVAPFGEEDMVPLADLVALEAIEDDAERLAALDAYLIDTGEALSDLPHIAVNDDQAHRLRMGNPIILRGRDAPLPTPEAYATAQGKLVAIGEIAEGEFRPKRVFATQ.

Aspartate 49 acts as the Nucleophile in catalysis.

Belongs to the pseudouridine synthase TruB family. Type 1 subfamily.

It catalyses the reaction uridine(55) in tRNA = pseudouridine(55) in tRNA. Its function is as follows. Responsible for synthesis of pseudouridine from uracil-55 in the psi GC loop of transfer RNAs. The protein is tRNA pseudouridine synthase B of Rhizobium meliloti (strain 1021) (Ensifer meliloti).